We begin with the raw amino-acid sequence, 321 residues long: MGEPQGSRRILVTGGSGLVGRAIQKVVADGAGLPGEEWVFVSSKDADLTDAAQTQALFQKVQPTHVIHLAAMVGGLFRNIKYNLDFWRKNVHINDNVLHSAFEVGTRKVVSCLSTCIFPDKTTYPIDETMIHNGPPHSSNFGYSYAKRMIDVQNRAYFQQHGCTFTAVIPTNVFGPHDNFNIEDGHVLPGLIHKVHLAKSNGSALTVWGTGKPRRQFIYSLDLARLFIWVLREYNEVEPIILSVGEEDEVSIKEAAEAVVEAMDFCGEVTFDSTKSDGQYKKTASNGKLRAYLPDFRFTPFKQAVKETCAWFTDNYEQARK.

14–20 (GGSGLVG) lines the NADP(+) pocket. Residue Tyr-143 is the Proton donor/acceptor of the active site. NADP(+)-binding positions include Lys-147, 170 to 173 (PTNV), and His-186. The substrate site is built by Lys-194, Trp-208, Arg-215, and Asp-277.

The protein belongs to the NAD(P)-dependent epimerase/dehydratase family. Fucose synthase subfamily. As to quaternary structure, homodimer.

It carries out the reaction GDP-beta-L-fucose + NADP(+) = GDP-4-dehydro-alpha-D-rhamnose + NADPH + H(+). It functions in the pathway nucleotide-sugar biosynthesis; GDP-L-fucose biosynthesis via de novo pathway; GDP-L-fucose from GDP-alpha-D-mannose: step 2/2. Its function is as follows. Catalyzes the two-step NADP-dependent conversion of GDP-4-dehydro-6-deoxy-D-mannose to GDP-fucose, involving an epimerase and a reductase reaction. In Cricetulus griseus (Chinese hamster), this protein is GDP-L-fucose synthase (GFUS).